We begin with the raw amino-acid sequence, 373 residues long: Probable G-protein coupled receptor 173 (373 aa).

Topologically, residues 1–26 (MANTTGEPEEVSGALSLPSASAYVKL) are extracellular. The N-linked (GlcNAc...) asparagine glycan is linked to Asn-3. A helical membrane pass occupies residues 27-47 (VLLGLIMCVSLAGNAILSLLV). The Cytoplasmic segment spans residues 48-59 (LKERALHKAPYY). Residues 60–80 (FLLDLCLADGIRSAICFPFVL) form a helical membrane-spanning segment. At 81–97 (ASVRHGSSWTFSALSCK) the chain is on the extracellular side. Residues Cys-96 and Cys-174 are joined by a disulfide bond. The chain crosses the membrane as a helical span at residues 98–118 (IVAFMAVLFCFHAAFMLFCIS). Residues 119 to 139 (VTRYMAIAHHRFYAKRMTLWT) lie on the Cytoplasmic side of the membrane. A helical membrane pass occupies residues 140-160 (CAAVICMAWTLSVAMAFPPVF). At 161-188 (DVGTYKFIREEDQCIFEHRYFKANDTLG) the chain is on the extracellular side. A glycan (N-linked (GlcNAc...) asparagine) is linked at Asn-184. Residues 189–209 (FMLMLAVLMAATHAVYGKLLL) form a helical membrane-spanning segment. Over 210-287 (FEYRHRKMKP…VKGEKQLGRM (78 aa)) the chain is Cytoplasmic. The helical transmembrane segment at 288 to 308 (FYAITLLFLLLWSPYIVACYW) threads the bilayer. Topologically, residues 309–322 (RVFVKACAVPHRYL) are extracellular. A helical transmembrane segment spans residues 323–343 (ATAVWMSFAQAAVNPIVCFLL). The Cytoplasmic segment spans residues 344-373 (NKDLKKCLRTHAPCWGTGGAPAPREPYCVM).

The protein belongs to the G-protein coupled receptor 1 family. In terms of tissue distribution, expressed in the ovary, specifically in granulosa cells of follicles that have passed the primary stage and in oocytes (at protein level). Expressed in preadipocytes.

The protein resides in the cell membrane. In terms of biological role, is a receptor for the SMIM20 derived peptides Phoenixin-14 and Phoenixin-20. It mediates the Phoenixin-14 and Phoenixin-20 augmentation of gonadotropin-releasing hormone (GNRH) signaling in the hypothalamus and pituitary gland. In the ovary, it mediates the effects of Phoenixin-14 and Phoenixin-20 induced granulosa cell proliferation during follicular growth. This chain is Probable G-protein coupled receptor 173 (Gpr173), found in Mus musculus (Mouse).